A 334-amino-acid polypeptide reads, in one-letter code: Succinylglutamate desuccinylase (334 aa).

H59, E62, and H151 together coordinate Zn(2+). The active site involves E215.

Belongs to the AspA/AstE family. Succinylglutamate desuccinylase subfamily. The cofactor is Zn(2+).

It catalyses the reaction N-succinyl-L-glutamate + H2O = L-glutamate + succinate. Its pathway is amino-acid degradation; L-arginine degradation via AST pathway; L-glutamate and succinate from L-arginine: step 5/5. Transforms N(2)-succinylglutamate into succinate and glutamate. This chain is Succinylglutamate desuccinylase, found in Pseudomonas fluorescens (strain SBW25).